The following is a 290-amino-acid chain: Bifunctional protein FolD (290 aa).

NADP(+)-binding positions include 169–171 (GAS), I194, and I235.

Belongs to the tetrahydrofolate dehydrogenase/cyclohydrolase family. As to quaternary structure, homodimer.

The enzyme catalyses (6R)-5,10-methylene-5,6,7,8-tetrahydrofolate + NADP(+) = (6R)-5,10-methenyltetrahydrofolate + NADPH. It catalyses the reaction (6R)-5,10-methenyltetrahydrofolate + H2O = (6R)-10-formyltetrahydrofolate + H(+). Its pathway is one-carbon metabolism; tetrahydrofolate interconversion. In terms of biological role, catalyzes the oxidation of 5,10-methylenetetrahydrofolate to 5,10-methenyltetrahydrofolate and then the hydrolysis of 5,10-methenyltetrahydrofolate to 10-formyltetrahydrofolate. This is Bifunctional protein FolD from Helicobacter pylori (strain J99 / ATCC 700824) (Campylobacter pylori J99).